The chain runs to 172 residues: Adenine phosphoribosyltransferase (172 aa).

This sequence belongs to the purine/pyrimidine phosphoribosyltransferase family. In terms of assembly, homodimer.

Its subcellular location is the cytoplasm. The enzyme catalyses AMP + diphosphate = 5-phospho-alpha-D-ribose 1-diphosphate + adenine. It functions in the pathway purine metabolism; AMP biosynthesis via salvage pathway; AMP from adenine: step 1/1. Catalyzes a salvage reaction resulting in the formation of AMP, that is energically less costly than de novo synthesis. The sequence is that of Adenine phosphoribosyltransferase from Roseiflexus castenholzii (strain DSM 13941 / HLO8).